We begin with the raw amino-acid sequence, 294 residues long: tRNA pseudouridine synthase B (294 aa).

The Nucleophile role is filled by D39.

The protein belongs to the pseudouridine synthase TruB family. Type 1 subfamily.

The enzyme catalyses uridine(55) in tRNA = pseudouridine(55) in tRNA. Functionally, responsible for synthesis of pseudouridine from uracil-55 in the psi GC loop of transfer RNAs. The sequence is that of tRNA pseudouridine synthase B from Streptococcus pyogenes serotype M2 (strain MGAS10270).